The chain runs to 221 residues: GTP cyclohydrolase 1 (221 aa).

Zn(2+) is bound by residues C111, H114, and C182.

Belongs to the GTP cyclohydrolase I family. Homomer.

It carries out the reaction GTP + H2O = 7,8-dihydroneopterin 3'-triphosphate + formate + H(+). The protein operates within cofactor biosynthesis; 7,8-dihydroneopterin triphosphate biosynthesis; 7,8-dihydroneopterin triphosphate from GTP: step 1/1. The polypeptide is GTP cyclohydrolase 1 (Erwinia tasmaniensis (strain DSM 17950 / CFBP 7177 / CIP 109463 / NCPPB 4357 / Et1/99)).